Here is a 601-residue protein sequence, read N- to C-terminus: Elongation factor 4 (601 aa).

A tr-type G domain is found at 6-188 (QFIRNFSIIA…AITKEIPAPK (183 aa)). Residues 18–23 (DHGKST) and 135–138 (NKID) each bind GTP.

Belongs to the TRAFAC class translation factor GTPase superfamily. Classic translation factor GTPase family. LepA subfamily.

The protein resides in the cell inner membrane. The catalysed reaction is GTP + H2O = GDP + phosphate + H(+). Its function is as follows. Required for accurate and efficient protein synthesis under certain stress conditions. May act as a fidelity factor of the translation reaction, by catalyzing a one-codon backward translocation of tRNAs on improperly translocated ribosomes. Back-translocation proceeds from a post-translocation (POST) complex to a pre-translocation (PRE) complex, thus giving elongation factor G a second chance to translocate the tRNAs correctly. Binds to ribosomes in a GTP-dependent manner. This is Elongation factor 4 from Leptospira borgpetersenii serovar Hardjo-bovis (strain JB197).